A 1404-amino-acid chain; its full sequence is DNA-directed RNA polymerase subunit beta' (1404 aa).

Zn(2+)-binding residues include cysteine 70, cysteine 72, cysteine 85, and cysteine 88. Residues aspartate 460, aspartate 462, and aspartate 464 each contribute to the Mg(2+) site. Cysteine 814, cysteine 888, cysteine 895, and cysteine 898 together coordinate Zn(2+).

The protein belongs to the RNA polymerase beta' chain family. The RNAP catalytic core consists of 2 alpha, 1 beta, 1 beta' and 1 omega subunit. When a sigma factor is associated with the core the holoenzyme is formed, which can initiate transcription. The cofactor is Mg(2+). Zn(2+) is required as a cofactor.

The enzyme catalyses RNA(n) + a ribonucleoside 5'-triphosphate = RNA(n+1) + diphosphate. Its function is as follows. DNA-dependent RNA polymerase catalyzes the transcription of DNA into RNA using the four ribonucleoside triphosphates as substrates. The sequence is that of DNA-directed RNA polymerase subunit beta' from Shewanella halifaxensis (strain HAW-EB4).